The following is a 60-amino-acid chain: Metallothionein-like protein EMB30 (60 aa).

It belongs to the metallothionein superfamily. Type 15 family.

In terms of biological role, metallothioneins have a high content of cysteine residues that bind various heavy metals. The sequence is that of Metallothionein-like protein EMB30 (EMB30) from Picea glauca (White spruce).